The following is a 160-amino-acid chain: Dysbindin domain-containing protein 1 (160 aa).

2 disordered regions span residues 1–34 and 95–160; these read MESP…GDTC and ADSD…PKED. Ser3, Ser97, and Ser121 each carry phosphoserine. The segment covering 127–143 has biased composition (basic and acidic residues); it reads TRAEQNREKQTPSDPER.

It belongs to the dysbindin family.

The polypeptide is Dysbindin domain-containing protein 1 (Dbndd1) (Rattus norvegicus (Rat)).